The chain runs to 359 residues: 4-galactosyl-N-acetylglucosaminide 3-alpha-L-fucosyltransferase 9 (359 aa).

Residues 1–11 (MTSASKGILRP) are Cytoplasmic-facing. The chain crosses the membrane as a helical; Signal-anchor for type II membrane protein span at residues 12–32 (FLIVCIILACSMVCLFIYIKP). Topologically, residues 33–359 (TNSWIFSPME…VGNLEKWFWN (327 aa)) are lumenal. N-linked (GlcNAc...) asparagine glycosylation is present at Asn-62. Residues 63–168 (ETTILIWVWP…RRDSDIQVPY (106 aa)) form an acceptor-binding region. Position 75 (Gln-75) interacts with a beta-D-galactosyl-(1-&gt;4)-N-acetyl-beta-D-glucosaminyl derivative. 3 cysteine pairs are disulfide-bonded: Cys-82–Cys-335, Cys-91–Cys-338, and Cys-190–Cys-238. The N-linked (GlcNAc...) asparagine glycan is linked to Asn-101. Glu-137 is a binding site for a beta-D-galactosyl-(1-&gt;4)-N-acetyl-beta-D-glucosaminyl derivative. Catalysis depends on Glu-137, which acts as the Nucleophile. Glu-137 lines the GDP-beta-L-fucose pocket. Residue Asn-153 is glycosylated (N-linked (GlcNAc...) asparagine). GDP-beta-L-fucose is bound by residues Tyr-168, Val-192, Ser-194, Asn-195, Arg-202, Val-226, Tyr-241, Asn-246, Tyr-252, Glu-255, and Lys-256. Residues 169–326 (GFLTVSTNPF…NWRKDFTVNL (158 aa)) are donor-binding. Positions 327–359 (PRFWESHACLACDHVKRHQEYKSVGNLEKWFWN) are acceptor-binding.

The protein belongs to the glycosyltransferase 10 family. Homodimer. N-glycosylated with complex-type N-glycans.

It is found in the golgi apparatus. The protein localises to the trans-Golgi network membrane. The protein resides in the golgi apparatus membrane. The enzyme catalyses a beta-D-galactosyl-(1-&gt;4)-N-acetyl-beta-D-glucosaminyl derivative + GDP-beta-L-fucose = a beta-D-galactosyl-(1-&gt;4)-[alpha-L-fucosyl-(1-&gt;3)]-N-acetyl-beta-D-glucosaminyl derivative + GDP + H(+). The catalysed reaction is an alpha-Neu5Ac-(2-&gt;3)-beta-D-Gal-(1-&gt;4)-beta-D-GlcNAc-(1-&gt;3)-beta-D-Gal-(1-&gt;4)-beta-D-GlcNAc derivative + GDP-beta-L-fucose = an alpha-Neu5Ac-(2-&gt;3)-beta-D-Gal-(1-&gt;4)-beta-D-GlcNAc-(1-&gt;3)-beta-D-Gal-(1-&gt;4)-[alpha-L-Fuc-(1-&gt;3)]-beta-D-GlcNAc derivative + GDP + H(+). It carries out the reaction alpha-N-glycoloylneuraminosyl-(2-&gt;3)-beta-D-galactosyl-(1-&gt;4)-N-acetyl-beta-D-glucosaminyl-(1-&gt;3)-beta-D-galactosyl-(1-&gt;4)-N-acetyl-beta-D-glucosaminyl-(1-&gt;3)-beta-D-galactosyl-(1-&gt;4)-beta-D-glucosyl-(1&lt;-&gt;1')-ceramide + GDP-beta-L-fucose = alpha-N-glycoloylneuraminosyl-(2-&gt;3)-beta-D-galactosyl-(1-&gt;4)-N-acetyl-beta-D-glucosaminyl-(1-&gt;3)-beta-D-galactosyl-(1-&gt;4)-[alpha-L-fucosyl-(1-&gt;3)]-N-acetyl-beta-D-glucosaminyl-(1-&gt;3)-beta-D-galactosyl-(1-&gt;4)-beta-D-glucosyl-(1&lt;-&gt;1')-ceramide + GDP + H(+). It catalyses the reaction alpha-D-galactosyl-(1-&gt;3)-beta-D-galactosyl-(1-&gt;4)-N-acetyl-beta-D-glucosaminyl-(1-&gt;3)-beta-D-galactosyl-(1-&gt;4)-beta-D-glucosyl-(1&lt;-&gt;1')-ceramide + GDP-beta-L-fucose = a neolactoside IV(3)-alpha-Gal,III(3)-alpha-Fuc-nLc4Cer + GDP + H(+). The enzyme catalyses a neolactoside nLc4Cer + GDP-beta-L-fucose = a neolactoside III(3)-alpha-Fuc-nLc4Cer + GDP + H(+). The catalysed reaction is an N-acetyl-alpha-neuraminyl-(2-&gt;3)-beta-D-galactosyl-(1-&gt;4)-N-acetyl-beta-D-glucosaminyl derivative + GDP-beta-L-fucose = an alpha-Neu5Ac-(2-&gt;3)-beta-D-Gal-(1-&gt;4)-[alpha-L-Fuc-(1-&gt;3)]-beta-D-GlcNAc derivative + GDP + H(+). It carries out the reaction beta-D-Gal-(1-&gt;4)-beta-D-GlcNAc-(1-&gt;3)-beta-D-Gal-(1-&gt;4)-D-Glc + GDP-beta-L-fucose = beta-D-Gal-(1-&gt;4)-[alpha-L-Fuc-(1-&gt;3)]-beta-D-GlcNAc-(1-&gt;3)-beta-D-Gal-(1-&gt;4)-D-Glc + GDP + H(+). It catalyses the reaction an alpha-L-Fuc-(1-&gt;2)-beta-D-Gal-(1-&gt;4)-beta-D-GlcNAc derivative + GDP-beta-L-fucose = an alpha-L-Fuc-(1-&gt;2)-beta-D-Gal-(1-&gt;4)-[alpha-L-Fuc-(1-&gt;3)]-beta-D-GlcNAc derivative + GDP + H(+). It participates in protein modification; protein glycosylation. It functions in the pathway glycolipid biosynthesis. Its activity is regulated as follows. Activated by Mn2+. Its function is as follows. Catalyzes alpha(1-&gt;3) linkage of fucosyl moiety transferred from GDP-beta-L-fucose to N-acetyl glucosamine (GlcNAc) within type 2 lactosamine (LacNAc, beta-D-Gal-(1-&gt;4)-beta-D-GlcNAc-) glycan attached to glycolipids and N- or O-linked glycoproteins. Fucosylates distal type 2 LacNAc and its fucosylated (H-type 2 LacNAc) and sialylated (sialyl-type 2 LacNAc) derivatives to form Lewis x (Lex) (CD15) and Lewis y (Ley) antigenic epitopes involved in cell adhesion and differentiation. Generates Lex epitopes in the brain, presumably playing a role in the maintenance of neuronal stemness and neurite outgrowth in progenitor neural cells. Fucosylates the internal type 2 LacNAc unit of the polylactosamine chain to form VIM-2 antigen that serves as recognition epitope for SELE. Can also modify milk oligosaccharides in particular type 2 tetrasaccharide LNnT. This is 4-galactosyl-N-acetylglucosaminide 3-alpha-L-fucosyltransferase 9 from Bos taurus (Bovine).